The following is a 597-amino-acid chain: Leishmanolysin (597 aa).

The first 39 residues, 1–39, serve as a signal peptide directing secretion; that stretch reads MSVDSSSTHRHRCVAARLVPLAAAGAAVTVAVGTAAAWA. A propeptide spans 40–99 (activation peptide); the sequence is HAGAVQHRCIHDAMQARVRQSVAAQRMAPSAVSAVGLPHVTLDAGNTAAGADPSTGTANV. Disulfide bonds link cysteine 124–cysteine 141 and cysteine 190–cysteine 229. Histidine 263 serves as a coordination point for Zn(2+). Residue glutamate 264 is part of the active site. Histidine 267 contributes to the Zn(2+) binding site. Residue asparagine 299 is glycosylated (N-linked (GlcNAc...) asparagine). 7 disulfides stabilise this stretch: cysteine 313/cysteine 383, cysteine 390/cysteine 452, cysteine 403/cysteine 422, cysteine 412/cysteine 486, cysteine 463/cysteine 507, cysteine 512/cysteine 562, and cysteine 532/cysteine 555. Histidine 332 contributes to the Zn(2+) binding site. Residue asparagine 404 is glycosylated (N-linked (GlcNAc...) asparagine). The GPI-anchor amidated asparagine moiety is linked to residue asparagine 574. The propeptide at 575–597 is removed in mature form; the sequence is AAGRRGPRAATALVVAALLAVAL.

This sequence belongs to the peptidase M8 family. It depends on Zn(2+) as a cofactor.

Its subcellular location is the cell membrane. It catalyses the reaction Preference for hydrophobic residues at P1 and P1' and basic residues at P2' and P3'. A model nonapeptide is cleaved at -Ala-Tyr-|-Leu-Lys-Lys-.. Has an integral role during the infection of macrophages in the mammalian host. This is Leishmanolysin (gp63) from Leishmania amazonensis.